We begin with the raw amino-acid sequence, 821 residues long: Phenylalanine--tRNA ligase beta subunit (821 aa).

A tRNA-binding domain is found at 39-149 (RTWAEGVVVG…DAVTVGEDVR (111 aa)). The B5 domain maps to 409–503 (PLERTLTLRL…RLYGYDRFEE (95 aa)). 4 residues coordinate Mg(2+): aspartate 481, aspartate 487, glutamate 490, and glutamate 491. The region spanning 724 to 820 (STYPASDRDL…LVEKYAVTLR (97 aa)) is the FDX-ACB domain.

This sequence belongs to the phenylalanyl-tRNA synthetase beta subunit family. Type 1 subfamily. As to quaternary structure, tetramer of two alpha and two beta subunits. Requires Mg(2+) as cofactor.

It localises to the cytoplasm. It carries out the reaction tRNA(Phe) + L-phenylalanine + ATP = L-phenylalanyl-tRNA(Phe) + AMP + diphosphate + H(+). The polypeptide is Phenylalanine--tRNA ligase beta subunit (Thermosynechococcus vestitus (strain NIES-2133 / IAM M-273 / BP-1)).